A 1598-amino-acid polypeptide reads, in one-letter code: Fatty acid synthase subunit alpha (1598 aa).

The segment at 96-134 is disordered; that stretch reads RTQPHKSSAPQEPVPKAAPKAAPPVPVATAPLPEPGRQV. Over residues 104–115 the composition is skewed to low complexity; the sequence is APQEPVPKAAPK. Residues 143–221 enclose the Carrier domain; the sequence is DVPIQSRDVI…QIVSGSTSTT (79 aa). An O-(pantetheine 4'-phosphoryl)serine modification is found at Ser181. Residues 543–784 are ketoreductase (KR) domain; the sequence is LKGKTVLLTG…LAALLVNPFA (242 aa). The interval 818-844 is disordered; that stretch reads KQDSTSTPTHQHLPSHHHVDEPEIGKP. The segment covering 820–829 has biased composition (polar residues); the sequence is DSTSTPTHQH. The Ketosynthase family 3 (KS3) domain maps to 992–1524; the sequence is HEIVLTRDLA…QKGAQAIIVH (533 aa). Catalysis depends on Cys1175, which acts as the For beta-ketoacyl synthase activity. Residues 1280–1301 form a disordered region; it reads ASDKTGRSVPSPGKGTLTNARE. Residues His1409 and His1450 each act as for beta-ketoacyl synthase activity in the active site.

Belongs to the thiolase-like superfamily. Fungal fatty acid synthetase subunit alpha family. Fatty acid synthase is composed of alpha and beta subunits.

It carries out the reaction acetyl-CoA + n malonyl-CoA + 2n NADPH + 4n H(+) = a long-chain-acyl-CoA + n CoA + n CO2 + 2n NADP(+).. It catalyses the reaction a fatty acyl-[ACP] + malonyl-[ACP] + H(+) = a 3-oxoacyl-[ACP] + holo-[ACP] + CO2. The catalysed reaction is a (3R)-hydroxyacyl-[ACP] + NADP(+) = a 3-oxoacyl-[ACP] + NADPH + H(+). The protein operates within mycotoxin biosynthesis. Functionally, fatty acid synthase subunit alpha; part of the gene cluster that mediates the biosynthesis of gramillins A and B, bicyclic lipopeptides that induce cell death in maize leaves but not in wheat leaves. The nonribosomal peptide synthetase GRA1 incorporates respectively a glutamic adic (Glu), a leucine (Leu), a serine (Ser), a hydroxyglutamine (HOGln), a 2-amino decanoic acid, and 2 cysteins (CysB and CysA). The biosynthesis of 2-amino decanoic acid incorporated in gramillins could be initiated by a fatty acid synthase composed of the alpha and beta subunits FGSG_00036 and FGSG_11656. The cytochrome P450 monooxygenase FGSG_15680 could hydroxylate the fatty acid chain. Subsequent oxidation to the ketone by the oxidoreductase FGSG_00048 and transamination by aminotransferase FGSG_00049 could form 2-amino-decanoic acid. On the other hand, FGSG_15680 could also be responsible for the HO-modified glutamine at the gamma-position. Whether hydroxylation occurs on the fully assembled product or on the Gln residue prior to assembly into the gramillins requires further proof. The thioredoxin FGSG_00043 could also be required for the disulfide-bond formation between CysA and CysB. The specific involvement of the remaining proteins from the cluster is more difficult to discern, but could have broader regulatory (FGSG_00040 and FGSG_11657) or enzymatic functions (FGSG_00044 and FGSG_00045). The final C-domain of GRA1 does not possess the expected sequence of a termination CT domain, often implicated in macrocyclization and release of a cyclopeptidein fungal NRPs; and the thioesterase FGSG_00047 may act in concert with the terminal C-domain of GRA1 to catalyze the formation of the macrocyclic anhydride and release of the products. The protein is Fatty acid synthase subunit alpha of Gibberella zeae (strain ATCC MYA-4620 / CBS 123657 / FGSC 9075 / NRRL 31084 / PH-1) (Wheat head blight fungus).